We begin with the raw amino-acid sequence, 488 residues long: Beta-1,3-glucan-binding protein (488 aa).

A signal peptide spans 1–17 (MFVTFICFLACLTCSYG). The interval 18–135 (QPRAQQYVVP…GTPADTSLEP (118 aa)) is binds to curdlan, laminarihexaose and laminarin. The complex formation with laminarin induces self-association of the complexes into a macro structure, likely containing six protein and three laminarin molecules. The macro structures may form a platform on a microbial surface for recruitment of downstream proteases, as a means of amplification of the initial signal of pathogen recognition for the activation of the phenoloxidase cascade. Residues 18 to 198 (QPRAQQYVVP…LKDLANWEAE (181 aa)) are binds to curdlan, lipopolysaccharide and lipoteichoic acid, activates the phenoloxidase cascade and is resistant to proteolytic degradation by trypsin or chymotrypsin, but is not as effective as the full-length protein in aggregation of microorganisms. The CBM39 domain maps to 24–123 (YVVPSAKLEA…GEWTVTEFVN (100 aa)). The tract at residues 24-127 (YVVPSAKLEA…VTEFVNEDGT (104 aa)) is binds to laminarihexaose and laminarin. Residues D72, 99-101 (WTY), and R110 each bind substrate. The disordered stretch occupies residues 125–158 (DGTPADTSLEPTTAPTPVRPDQPNQPIPTHRPDP). Positions 129-139 (ADTSLEPTTAP) are enriched in polar residues. Residues 141–150 (PVRPDQPNQP) show a composition bias toward pro residues. The GH16 domain occupies 144 to 488 (PDQPNQPIPT…KVDYVRVYAL (345 aa)). The segment at 199 to 488 (VKFPEEPDYP…KVDYVRVYAL (290 aa)) is binds to laminarin, but not to curdlan, does not activate the phenoloxidase cascade, is susceptible to proteinase digestion by trypsin or chymotrypsin and does not cause aggregation of microorganisms. N-linked (GlcNAc...) asparagine glycosylation is found at N373 and N453.

This sequence belongs to the insect beta-1,3-glucan binding protein family. In terms of assembly, monomer. Post-translationally, the N-terminus is blocked. As to expression, fat body and hemolymph.

Its subcellular location is the secreted. Its function is as follows. Involved in the recognition of invading microorganisms causing their aggregation. Activates the phenoloxidase cascade. Binds specifically to beta-1,3-glucan. Binds to curdlan, a linear water-insoluble beta-1,3-glucan polysaccharide, and to laminarin, a water-soluble beta-1,3-glucan polysaccharide containing beta-1,6 branches. Also binds to lipopolysaccharide and lipoteichoic acid. The sequence is that of Beta-1,3-glucan-binding protein from Plodia interpunctella (Indianmeal moth).